The sequence spans 187 residues: Peptide methionine sulfoxide reductase A2-1 (187 aa).

The protein belongs to the MsrA Met sulfoxide reductase family.

The protein resides in the cytoplasm. Its subcellular location is the cytosol. It carries out the reaction L-methionyl-[protein] + [thioredoxin]-disulfide + H2O = L-methionyl-(S)-S-oxide-[protein] + [thioredoxin]-dithiol. The enzyme catalyses [thioredoxin]-disulfide + L-methionine + H2O = L-methionine (S)-S-oxide + [thioredoxin]-dithiol. Catalyzes the reduction of methionine sulfoxide (MetSO) to methionine in proteins. Plays a protective role against oxidative stress by restoring activity to proteins that have been inactivated by methionine oxidation. MSRA family specifically reduces the MetSO S-enantiomer. The polypeptide is Peptide methionine sulfoxide reductase A2-1 (MSRA2-1) (Oryza sativa subsp. japonica (Rice)).